A 362-amino-acid chain; its full sequence is Putative G-protein coupled receptor B0244.5 (362 aa).

The Extracellular portion of the chain corresponds to 1–47; sequence MQNIFENCSYHSKYEPYFLNCTNTTNQCVLIQDVGIIQAIDFWANLC. 3 N-linked (GlcNAc...) asparagine glycosylation sites follow: asparagine 7, asparagine 20, and asparagine 23. The chain crosses the membrane as a helical span at residues 48 to 68; it reads IPFTLFVIAFILNGYYLSILI. Residues 69 to 81 lie on the Cytoplasmic side of the membrane; sequence PEFRKMNDTTKKQ. Residues 82–102 form a helical membrane-spanning segment; sequence YIFVVSRGISSLSASSIMMVL. Over 103 to 125 the chain is Extracellular; sequence RLLKMLSTSFTVYFLFFLIDDLS. The helical transmembrane segment at 126 to 145 threads the bilayer; sequence FYSLLGSYVGSTLLLYLATV. The Cytoplasmic portion of the chain corresponds to 146–161; the sequence is RPIFYSIQISVRIVYK. Residues 162–182 traverse the membrane as a helical segment; the sequence is FALVNVLLAVVLAVTTAIFQA. Topologically, residues 183–204 are extracellular; it reads AEVSDGFFHCDVQHCQPIINIA. The helical transmembrane segment at 205-225 threads the bilayer; the sequence is MFVIIATSFLIPIITLTFVLV. The Cytoplasmic segment spans residues 226-255; it reads TLCFQKSRTQSIGNFTVDNSVYKSARTRLA. Residues 256-276 traverse the membrane as a helical segment; the sequence is WTLFTFTLISLTEMIPSSFLV. Over 277–295 the chain is Extracellular; it reads NLRVEDTITICVNFYQADH. The chain crosses the membrane as a helical span at residues 296-316; it reads LFIPAIMNSFQTLAWGIALIV. At 317–362 the chain is on the cytoplasmic side; it reads DPLCALLFDPRIRKVWVEHVSRLSIIIGRSFEACCHSNLNKEIQDK.

Belongs to the G-protein coupled receptor 1 family. B0244 subfamily.

The protein resides in the cell membrane. This Caenorhabditis elegans protein is Putative G-protein coupled receptor B0244.5.